The sequence spans 85 residues: MKPLVSPGLAKACTGLSLIGIVFLLVLSYLFSIEAETLMHDLVGSGLTGKQVAKTCLGAVVIYAVFFLFCGSQVIVSRYQKPVRI.

The next 2 helical transmembrane spans lie at C13 to I33 and C56 to V76.

In terms of assembly, V-ATPase is a heteromultimeric enzyme composed of a peripheral catalytic V1 complex (components A to H) attached to an integral membrane V0 proton pore complex (components: a, c, c', c'', d, e, f and VOA1).

The protein resides in the endoplasmic reticulum membrane. Functionally, accessory component of the V0 complex of vacuolar(H+)-ATPase (V-ATPase), a multisubunit enzyme composed of a peripheral complex (V1) that hydrolyzes ATP and a membrane integral complex (V0) that translocates protons. V-ATPase is responsible for acidifying and maintaining the pH of intracellular compartments. This is V-type proton ATPase subunit f from Schizosaccharomyces pombe (strain 972 / ATCC 24843) (Fission yeast).